A 172-amino-acid chain; its full sequence is MLTYKTFKILGREILIGVVWEEKIQGIAYSLDGLEFLKDQLSRVTSHLKSRGVKVNLLEEKSRYPDLVFDVLKGKIGNEKGFEELSLEGLTRFEIKVYSWLVKNVKRGEVITYGKVAKALKTSPIAVGGAMKRNPYPIIVPCHRVVGKNNPWLYTPKPSYKKFLLEVEGWIS.

Cys142 functions as the Nucleophile; methyl group acceptor in the catalytic mechanism.

Belongs to the MGMT family.

The protein resides in the cytoplasm. It catalyses the reaction a 6-O-methyl-2'-deoxyguanosine in DNA + L-cysteinyl-[protein] = S-methyl-L-cysteinyl-[protein] + a 2'-deoxyguanosine in DNA. The enzyme catalyses a 4-O-methyl-thymidine in DNA + L-cysteinyl-[protein] = a thymidine in DNA + S-methyl-L-cysteinyl-[protein]. Its function is as follows. Involved in the cellular defense against the biological effects of O6-methylguanine (O6-MeG) and O4-methylthymine (O4-MeT) in DNA. Repairs the methylated nucleobase in DNA by stoichiometrically transferring the methyl group to a cysteine residue in the enzyme. This is a suicide reaction: the enzyme is irreversibly inactivated. This chain is Methylated-DNA--protein-cysteine methyltransferase, found in Pyrococcus horikoshii (strain ATCC 700860 / DSM 12428 / JCM 9974 / NBRC 100139 / OT-3).